The following is a 129-amino-acid chain: Protein BEX2 (129 aa).

The interval 1-38 (MESKVEQGVKNLNMENDHQEKEEKEEKPQDANKREPVV) is disordered. Residues 15–36 (ENDHQEKEEKEEKPQDANKREP) show a composition bias toward basic and acidic residues. An Omega-N-methylarginine modification is found at arginine 51. The tract at residues 108–129 (SLRAVSTDPPHHDHHDEFCLMP) is disordered. Basic and acidic residues predominate over residues 116–129 (PPHHDHHDEFCLMP). The segment at 118–122 (HHDHH) is his cluster. Cysteine 126 is a Zn(2+) binding site.

The protein belongs to the BEX family. Interacts with LMO2, possibly leading to regulate the transcriptional activity of a DNA-binding complex containing LMO2. Interacts with OMP.

The protein resides in the nucleus. Its subcellular location is the cytoplasm. In terms of biological role, regulator of mitochondrial apoptosis and G1 cell cycle. Regulates the level of PP2A regulatory subunit B and PP2A phosphatase activity. In absence of reductive stress, acts as a pseudosubstrate for the CRL2(FEM1B) complex: associates with FEM1B via zinc, thereby preventing association between FEM1B and its substrates. This chain is Protein BEX2 (Bex2), found in Rattus norvegicus (Rat).